The following is a 131-amino-acid chain: Protein E11 homolog (131 aa).

Belongs to the chordopoxvirinae E11 family.

It localises to the virion. The sequence is that of Protein E11 homolog from Fowlpox virus (strain NVSL) (FPV).